The sequence spans 432 residues: NADH-quinone oxidoreductase subunit D (432 aa).

This sequence belongs to the complex I 49 kDa subunit family. As to quaternary structure, NDH-1 is composed of 14 different subunits. Subunits NuoB, C, D, E, F, and G constitute the peripheral sector of the complex.

The protein localises to the cell membrane. It catalyses the reaction a quinone + NADH + 5 H(+)(in) = a quinol + NAD(+) + 4 H(+)(out). In terms of biological role, NDH-1 shuttles electrons from NADH, via FMN and iron-sulfur (Fe-S) centers, to quinones in the respiratory chain. The immediate electron acceptor for the enzyme in this species is believed to be a menaquinone. Couples the redox reaction to proton translocation (for every two electrons transferred, four hydrogen ions are translocated across the cytoplasmic membrane), and thus conserves the redox energy in a proton gradient. This is NADH-quinone oxidoreductase subunit D from Mycobacterium marinum (strain ATCC BAA-535 / M).